We begin with the raw amino-acid sequence, 365 residues long: MTDSQQSKPKHVMMMAAGTGGHVFPALAVAKQLQQQGCQVSWLATPTGMENRLLKDQNIPIYQIDIQGVRGNGVIRKLAAPFKILKATFSAMRYMKQLKVDAVAGFGGYVAGPGGLAARLLGIPVLIHEQNAVAGFTNAQLSRVAKVVCEAFPNTFPASEKVVTTGNPVRREITDILSPKWRYDEREQAGKPLNILIVGGSLGAKALNERLPPALKQLEVPLNIFHQCGQQQVEATQALYADAPANLTVQVLPFIEDMAKAYSEADLIICRAGALTVTEVATAGVAAVFVPLPIAVDDHQTANAKFLADVGAAKICQQSTMTPEVLNQLFTTLMNRQLLTEMAVKARQHAQPNATQHVVDLIQKM.

UDP-N-acetyl-alpha-D-glucosamine is bound by residues 19–21, N131, R170, S201, I255, 274–279, and Q300; these read TGG and ALTVTE.

This sequence belongs to the glycosyltransferase 28 family. MurG subfamily.

The protein localises to the cell inner membrane. It catalyses the reaction di-trans,octa-cis-undecaprenyl diphospho-N-acetyl-alpha-D-muramoyl-L-alanyl-D-glutamyl-meso-2,6-diaminopimeloyl-D-alanyl-D-alanine + UDP-N-acetyl-alpha-D-glucosamine = di-trans,octa-cis-undecaprenyl diphospho-[N-acetyl-alpha-D-glucosaminyl-(1-&gt;4)]-N-acetyl-alpha-D-muramoyl-L-alanyl-D-glutamyl-meso-2,6-diaminopimeloyl-D-alanyl-D-alanine + UDP + H(+). Its pathway is cell wall biogenesis; peptidoglycan biosynthesis. Functionally, cell wall formation. Catalyzes the transfer of a GlcNAc subunit on undecaprenyl-pyrophosphoryl-MurNAc-pentapeptide (lipid intermediate I) to form undecaprenyl-pyrophosphoryl-MurNAc-(pentapeptide)GlcNAc (lipid intermediate II). The chain is UDP-N-acetylglucosamine--N-acetylmuramyl-(pentapeptide) pyrophosphoryl-undecaprenol N-acetylglucosamine transferase from Acinetobacter baumannii (strain AB307-0294).